The following is a 213-amino-acid chain: Ergothioneine transport ATP-binding protein EgtV (213 aa).

Residues 5–212 (VTIENVSFNY…ATKTLEIKAL (208 aa)) enclose the ABC transporter domain. Residue 37–44 (GESGSGKS) participates in ATP binding.

The protein belongs to the ABC transporter superfamily. As to quaternary structure, the complex is composed of two ATP-binding proteins (EgtV) and two transmembrane proteins (EgtU).

The protein localises to the cell inner membrane. The enzyme catalyses ergothioneine(out) + ATP + H2O = ergothioneine(in) + ADP + phosphate + H(+). Part of the ABC transporter complex EgtUV involved in the uptake of ergothioneine (EGT), a natural low-molecular weight (LMW) thiol antioxidant which protects H.pylori against bleach stress. Responsible for energy coupling to the transport system. The polypeptide is Ergothioneine transport ATP-binding protein EgtV (Helicobacter pylori (strain G27)).